A 384-amino-acid polypeptide reads, in one-letter code: Spermidine/putrescine import ATP-binding protein PotA (384 aa).

One can recognise an ABC transporter domain in the interval 6-238 (ITFNNVSKTF…PINHFVANFI (233 aa)). 40–47 (GASGSGKS) contacts ATP.

Belongs to the ABC transporter superfamily. Spermidine/putrescine importer (TC 3.A.1.11.1) family. The complex is composed of two ATP-binding proteins (PotA), two transmembrane proteins (PotB and PotC) and a solute-binding protein (PotD).

The protein localises to the cell membrane. The catalysed reaction is ATP + H2O + polyamine-[polyamine-binding protein]Side 1 = ADP + phosphate + polyamineSide 2 + [polyamine-binding protein]Side 1.. In terms of biological role, part of the ABC transporter complex PotABCD involved in spermidine/putrescine import. Responsible for energy coupling to the transport system. This Streptococcus pyogenes serotype M18 (strain MGAS8232) protein is Spermidine/putrescine import ATP-binding protein PotA.